The primary structure comprises 374 residues: Queuine tRNA-ribosyltransferase (374 aa).

Catalysis depends on Asp90, which acts as the Proton acceptor. Residues 90–94 (DSGGF), Asp144, Gln193, and Gly220 contribute to the substrate site. Residues 251 to 257 (GVGTPED) form an RNA binding region. Residue Asp270 is the Nucleophile of the active site. The RNA binding; important for wobble base 34 recognition stretch occupies residues 275-279 (TRNAR). Zn(2+) contacts are provided by Cys308, Cys310, Cys313, and His339.

The protein belongs to the queuine tRNA-ribosyltransferase family. In terms of assembly, homodimer. Within each dimer, one monomer is responsible for RNA recognition and catalysis, while the other monomer binds to the replacement base PreQ1. The cofactor is Zn(2+).

It catalyses the reaction 7-aminomethyl-7-carbaguanine + guanosine(34) in tRNA = 7-aminomethyl-7-carbaguanosine(34) in tRNA + guanine. The protein operates within tRNA modification; tRNA-queuosine biosynthesis. Catalyzes the base-exchange of a guanine (G) residue with the queuine precursor 7-aminomethyl-7-deazaguanine (PreQ1) at position 34 (anticodon wobble position) in tRNAs with GU(N) anticodons (tRNA-Asp, -Asn, -His and -Tyr). Catalysis occurs through a double-displacement mechanism. The nucleophile active site attacks the C1' of nucleotide 34 to detach the guanine base from the RNA, forming a covalent enzyme-RNA intermediate. The proton acceptor active site deprotonates the incoming PreQ1, allowing a nucleophilic attack on the C1' of the ribose to form the product. After dissociation, two additional enzymatic reactions on the tRNA convert PreQ1 to queuine (Q), resulting in the hypermodified nucleoside queuosine (7-(((4,5-cis-dihydroxy-2-cyclopenten-1-yl)amino)methyl)-7-deazaguanosine). The chain is Queuine tRNA-ribosyltransferase from Campylobacter fetus subsp. fetus (strain 82-40).